The chain runs to 787 residues: Elongation factor G-1, chloroplastic (787 aa).

A chloroplast-targeting transit peptide spans 1 to 86 (MAAESSLRVA…PRRNFSVFAM (86 aa)). Polar residues predominate over residues 14-24 (LCNLNGSQRRP). A disordered region spans residues 14–34 (LCNLNGSQRRPTTTTLSPLRF). One can recognise a tr-type G domain in the interval 98-373 (KDYRNIGIMA…AVVDYLPSPL (276 aa)). Residues 107–114 (AHIDAGKT), 171–175 (DTPGH), and 225–228 (NKMD) each bind GTP.

This sequence belongs to the TRAFAC class translation factor GTPase superfamily. Classic translation factor GTPase family. EF-G/EF-2 subfamily.

It localises to the plastid. The protein localises to the chloroplast. It functions in the pathway protein biosynthesis; polypeptide chain elongation. In terms of biological role, chloroplast-localized elongation factor EF-G involved in protein synthesis in plastids. Catalyzes the GTP-dependent ribosomal translocation step during translation elongation. During this step, the ribosome changes from the pre-translocational (PRE) to the post-translocational (POST) state as the newly formed A-site-bound peptidyl-tRNA and P-site-bound deacylated tRNA move to the P and E sites, respectively. Catalyzes the coordinated movement of the two tRNA molecules, the mRNA and conformational changes in the ribosome. In Glycine max (Soybean), this protein is Elongation factor G-1, chloroplastic (fusA1).